A 288-amino-acid polypeptide reads, in one-letter code: ATP synthase gamma chain (288 aa).

It belongs to the ATPase gamma chain family. In terms of assembly, F-type ATPases have 2 components, CF(1) - the catalytic core - and CF(0) - the membrane proton channel. CF(1) has five subunits: alpha(3), beta(3), gamma(1), delta(1), epsilon(1). CF(0) has three main subunits: a, b and c.

It is found in the cell membrane. In terms of biological role, produces ATP from ADP in the presence of a proton gradient across the membrane. The gamma chain is believed to be important in regulating ATPase activity and the flow of protons through the CF(0) complex. The polypeptide is ATP synthase gamma chain (Shouchella clausii (strain KSM-K16) (Alkalihalobacillus clausii)).